Reading from the N-terminus, the 206-residue chain is FMN-dependent NADH:quinone oxidoreductase (206 aa).

Residues 15–17, 94–97, and 138–141 each bind FMN; these read SVS, MYNF, and TRGG.

Belongs to the azoreductase type 1 family. As to quaternary structure, homodimer. FMN is required as a cofactor.

The enzyme catalyses 2 a quinone + NADH + H(+) = 2 a 1,4-benzosemiquinone + NAD(+). It catalyses the reaction N,N-dimethyl-1,4-phenylenediamine + anthranilate + 2 NAD(+) = 2-(4-dimethylaminophenyl)diazenylbenzoate + 2 NADH + 2 H(+). Functionally, quinone reductase that provides resistance to thiol-specific stress caused by electrophilic quinones. Its function is as follows. Also exhibits azoreductase activity. Catalyzes the reductive cleavage of the azo bond in aromatic azo compounds to the corresponding amines. This is FMN-dependent NADH:quinone oxidoreductase from Sinorhizobium medicae (strain WSM419) (Ensifer medicae).